The following is a 71-amino-acid chain: Mitotic-spindle organizing protein 1B (71 aa).

Belongs to the MOZART1 family. As to quaternary structure, homo- and heteromultimer. Part of the gamma-tubulin complex. Interacts with TUBB2/TUBB3, GIP2, GCP3 and TSA1 (via C-terminal domain). In terms of tissue distribution, mostly expressed in siliques and flowers, and, to a lower extent, in leaves, roots and seedlings, with highest levels in young tissues and meristematic cells, and the vasculature.

It localises to the cytoplasm. The protein resides in the cytoskeleton. Its subcellular location is the microtubule organizing center. It is found in the spindle. The protein localises to the nucleus. It localises to the phragmoplast. The protein resides in the nucleus envelope. Required for gamma-tubulin complex recruitment to the microtubule organizing centers (MTOCs). During mitosis, modulates gamma-tubulin complex localization, spindle stability and chromosomal segregation. Necessary for gametophyte development and embryogenesis. The polypeptide is Mitotic-spindle organizing protein 1B (GIP1) (Arabidopsis thaliana (Mouse-ear cress)).